The primary structure comprises 271 residues: Ferric vulnibactin reductase VuuB (271 aa).

The FAD-binding FR-type domain maps to 8-131 (VYPMLLDFVR…IGPAGPDPLI (124 aa)).

It belongs to the SIP oxidoreductase family. Monomer. It depends on FAD as a cofactor.

It is found in the cytoplasm. The enzyme catalyses 2 a Fe(II)-siderophore + NAD(+) + H(+) = 2 a Fe(III)-siderophore + NADH. Functionally, ferric-siderophore reductase involved in iron removal from the siderophores after their transport into the cell. Acts as a major ferric-vulnibactin reductase catalyzing the reduction of Fe(3+)-vulnibactin, a catecholate siderophore synthesized by V.vulnificus. Catalyzes reduction of Fe(3+)-aerobactin, a citrate-hydroxamate siderophore produced by other bacteria, in the absence of IutB. Catalyzes reduction of Fe(3+)-vibriobactin in vitro. No activity with ferrioxamine B or Fe(3+)-enterobactin. Catalyzes reduction of ferric chelating compounds Fe(3+)-nitrilotriacetic acid (NTA), Fe(3+)-citrate and Fe(3+)-EDTA as well as non-complexed FeCl3 in the presence of NADH as its electron donor and FAD as its cofactor in vitro. Highest activity with Fe(3+)-NTA as electron acceptor. This chain is Ferric vulnibactin reductase VuuB, found in Vibrio vulnificus.